The primary structure comprises 266 residues: MIQITVVQIDNYGPWTVTPNPRRESDLQALQSRLYCDMNLQFGAHKGLAFYTRFDNIIAITNGIDLETHKRIQNSVKNRYPFTVSMAVASAETAYEAQKLATKTIQEYGSAQDDVRKEVLDVANEFVSNGYVQLAHVDINDITGKLTDLETAYDTYLSVQKTKLKLMEELKKYDSLGFFIGGDNFMCPCNGMNEKDFLCMFEDIKDSCGIELKAGIGIGKTAEDASNLADIGLEVIREGKTDSQVYTLKQEIDEQKNVPYNYMCPI.

It belongs to the archaeal-type GTP cyclohydrolase family.

The enzyme catalyses GTP + 3 H2O = 2-amino-5-formylamino-6-(5-phospho-D-ribosylamino)pyrimidin-4(3H)-one + 2 phosphate + 2 H(+). Functionally, catalyzes the formation of 2-amino-5-formylamino-6-ribofuranosylamino-4(3H)-pyrimidinone ribonucleotide monophosphate and inorganic phosphate from GTP. Also has an independent pyrophosphate phosphohydrolase activity. The polypeptide is GTP cyclohydrolase III (Methanococcus maripaludis (strain DSM 14266 / JCM 13030 / NBRC 101832 / S2 / LL)).